A 228-amino-acid polypeptide reads, in one-letter code: Leucyl/phenylalanyl-tRNA--protein transferase (228 aa).

This sequence belongs to the L/F-transferase family.

It localises to the cytoplasm. It carries out the reaction N-terminal L-lysyl-[protein] + L-leucyl-tRNA(Leu) = N-terminal L-leucyl-L-lysyl-[protein] + tRNA(Leu) + H(+). The catalysed reaction is N-terminal L-arginyl-[protein] + L-leucyl-tRNA(Leu) = N-terminal L-leucyl-L-arginyl-[protein] + tRNA(Leu) + H(+). It catalyses the reaction L-phenylalanyl-tRNA(Phe) + an N-terminal L-alpha-aminoacyl-[protein] = an N-terminal L-phenylalanyl-L-alpha-aminoacyl-[protein] + tRNA(Phe). In terms of biological role, functions in the N-end rule pathway of protein degradation where it conjugates Leu, Phe and, less efficiently, Met from aminoacyl-tRNAs to the N-termini of proteins containing an N-terminal arginine or lysine. This Thiobacillus denitrificans (strain ATCC 25259 / T1) protein is Leucyl/phenylalanyl-tRNA--protein transferase.